The primary structure comprises 449 residues: UDP-N-acetylmuramoylalanine--D-glutamate ligase (449 aa).

Residue glycine 118–threonine 124 coordinates ATP.

It belongs to the MurCDEF family.

Its subcellular location is the cytoplasm. The catalysed reaction is UDP-N-acetyl-alpha-D-muramoyl-L-alanine + D-glutamate + ATP = UDP-N-acetyl-alpha-D-muramoyl-L-alanyl-D-glutamate + ADP + phosphate + H(+). The protein operates within cell wall biogenesis; peptidoglycan biosynthesis. Cell wall formation. Catalyzes the addition of glutamate to the nucleotide precursor UDP-N-acetylmuramoyl-L-alanine (UMA). In Staphylococcus aureus (strain MRSA252), this protein is UDP-N-acetylmuramoylalanine--D-glutamate ligase.